The following is a 463-amino-acid chain: Dopaminechrome tautomerase (463 aa).

Belongs to the major royal jelly protein family.

It is found in the secreted. It catalyses the reaction dopaminechrome = 5,6-dihydroxyindole. Its pathway is pigment biosynthesis; melanin biosynthesis. In terms of biological role, catalyzes the conversion of dopaminechrome to 5,6-dihydroxyindole in the eumelanin biosynthetic pathway originating from dopamine. Catalyzes tautomerization of dopaminechrome to 5,6-dihydroxyindole during eumelanin biosynthesis. Acts both dopaminechrome and N-methyl dopaminechrome but not on dopachrome or other aminochromes tested. This is Dopaminechrome tautomerase from Drosophila melanogaster (Fruit fly).